Reading from the N-terminus, the 291-residue chain is MADLDDIKDGKDFHTDKPQTNTLFALKGCGALDWGMQSRLARIFNPKTRKTVMLAFDHGYFQGPTTGLERIDINIAPLFEYADVLMCTRGILRSVVPPAINKPVVLRASGANSILTELSNEAVAVAMDDAVRLNSCAAAAQVYIGSEHEHQSIKNIIQLIDAGLRVGMPIMAVTGVGKDMARDQRYFSLATRIAAEMGAQIIKTYYVDKGFERIAAGCPVPIVIAGGKKLPEREALEMCYQAIDQGASGVDMGRNIFQSEDPVAMIKAVHAVVHHNETAERAYELFLSEKS.

Lys-203 acts as the Schiff-base intermediate with substrate in catalysis.

This sequence belongs to the DeoC/FbaB aldolase family. In terms of assembly, homodecamer.

It is found in the cytoplasm. The enzyme catalyses dihydroxyacetone phosphate + acetyl-CoA = 3-hydroxy-2,4-dioxopentyl phosphate + CoA. Its function is as follows. Involved in the degradation of phospho-AI-2, thereby terminating induction of the lsr operon and closing the AI-2 signaling cycle. Catalyzes the transfer of an acetyl moiety from 3-hydroxy-5-phosphonooxypentane-2,4-dione to CoA to form glycerone phosphate and acetyl-CoA. The protein is 3-hydroxy-5-phosphonooxypentane-2,4-dione thiolase of Salmonella typhimurium (strain LT2 / SGSC1412 / ATCC 700720).